The chain runs to 192 residues: VQ motif-containing protein 22 (192 aa).

Positions 24-38 are enriched in low complexity; that stretch reads ASTAVTTTTAGDTTS. The segment at 24–65 is disordered; sequence ASTAVTTTTAGDTTSIDSRLSPETGRVTKPTRRRSRASRRTP. The span at 52 to 62 shows a compositional bias: basic residues; that stretch reads KPTRRRSRASR. Residues 76–85 carry the VQ motif; that stretch reads FRAMVQQYTG. 2 disordered regions span residues 101-135 and 163-192; these read FSLTSSSDPSAGSSQQAPWQYNFQPHAPLQPPQRP and FGTVDGSGGGGSAPSSKEATNSNSSSSRLQ. Composition is skewed to low complexity over residues 102–114 and 175–192; these read SLTSSSDPSAGSS and APSSKEATNSNSSSSRLQ.

It localises to the nucleus. Functionally, may function as positive regulator of plant growth. This chain is VQ motif-containing protein 22, found in Arabidopsis thaliana (Mouse-ear cress).